We begin with the raw amino-acid sequence, 323 residues long: Methionyl-tRNA formyltransferase (323 aa).

Position 115 to 118 (115 to 118 (SLLP)) interacts with (6S)-5,6,7,8-tetrahydrofolate.

The protein belongs to the Fmt family.

It catalyses the reaction L-methionyl-tRNA(fMet) + (6R)-10-formyltetrahydrofolate = N-formyl-L-methionyl-tRNA(fMet) + (6S)-5,6,7,8-tetrahydrofolate + H(+). Its function is as follows. Attaches a formyl group to the free amino group of methionyl-tRNA(fMet). The formyl group appears to play a dual role in the initiator identity of N-formylmethionyl-tRNA by promoting its recognition by IF2 and preventing the misappropriation of this tRNA by the elongation apparatus. This is Methionyl-tRNA formyltransferase from Lactococcus lactis subsp. cremoris (strain MG1363).